The sequence spans 744 residues: MSGPEDPADRRHGEVPAPRRDIPRPLVERRDLMLLAAGTHRDPHTVLGAHPHPDGTVVRVLRPHAAKVSVRVGGVDHPLDSVGYGVFAAVLPHPELMDYRIVTEYPGGPTVIAADGFRFLPTLGELDLHLIGEGRHEHLWHVLGAHPRRYTTLDGPVSGTSFAVWAPNARGVTVIGDFDGWSGNTAPMRALGTSGVWEVFVPDVGSGTKYKYRVHGADGRVVDHADPLAFATELPPATASVVTGSDYTWQDAQWLERRRSTDPTRSPMSVYEVHLGSWRPGLGYRELAEQLADYVRAAGYTHVELLPVAEHPFGGSWGYQVTSYYAPTARFGSPDDFRAFVDHLHGAGIGVLLDWVPAHFPRDEWALARFDGTPLYEHPDPRRGEQLDWGTYVFDFGRNEVRNFLVANARFWIEEFHIDGLRVDAVASMLYLDYSRGENWEPNIHGGRENLEAVAFLRELNDVVHRAHPGVVTIAEESTTWPGVTRGTEVGGLGFTMKWNMGWMHDTLGFLARDPIHRSWHHNEITFSLVYAWSENYVLPISHDEVVHGKGTLWTRMPGDDFAKAAGVRALLAYMWAHPGKQLLFMGQDFGQFREWSHDRGLDWGELDNPLHRGIATAVRDLNRVYRATPALWSQDTTPGGYAWIEADDRDRNVLAFLRYGSDGSTVACVFNFSGALHGEYRVGLPIAGEWTEILNTDAADYGGSGVGNYGVVRTEEIPWHGRPVSATVALAPNSAVWLAAPRA.

The tract at residues 1-23 is disordered; sequence MSGPEDPADRRHGEVPAPRRDIP. Over residues 7–23 the composition is skewed to basic and acidic residues; sequence PADRRHGEVPAPRRDIP. Asp424 functions as the Nucleophile in the catalytic mechanism. Glu476 serves as the catalytic Proton donor.

This sequence belongs to the glycosyl hydrolase 13 family. GlgB subfamily. As to quaternary structure, monomer.

It catalyses the reaction Transfers a segment of a (1-&gt;4)-alpha-D-glucan chain to a primary hydroxy group in a similar glucan chain.. It functions in the pathway glycan biosynthesis; glycogen biosynthesis. Functionally, catalyzes the formation of the alpha-1,6-glucosidic linkages in glycogen by scission of a 1,4-alpha-linked oligosaccharide from growing alpha-1,4-glucan chains and the subsequent attachment of the oligosaccharide to the alpha-1,6 position. The sequence is that of 1,4-alpha-glucan branching enzyme GlgB from Nocardia farcinica (strain IFM 10152).